The primary structure comprises 78 residues: Acyl carrier protein (78 aa).

A Carrier domain is found at 2–77 (DELFLRMRAL…DAYEFIKSKV (76 aa)). S37 is subject to O-(pantetheine 4'-phosphoryl)serine.

This sequence belongs to the acyl carrier protein (ACP) family. Post-translationally, 4'-phosphopantetheine is transferred from CoA to a specific serine of apo-ACP by AcpS. This modification is essential for activity because fatty acids are bound in thioester linkage to the sulfhydryl of the prosthetic group.

It is found in the cytoplasm. It functions in the pathway lipid metabolism; fatty acid biosynthesis. In terms of biological role, carrier of the growing fatty acid chain in fatty acid biosynthesis. In Treponema pallidum (strain Nichols), this protein is Acyl carrier protein.